A 566-amino-acid chain; its full sequence is MERPSPCGSWLVGCLFTIAVFQPPVQVLGDAGKVYIAPLRDTANLPCPLFLWPNMVLSEMRWYRPGHLPRTQAVHVFRDGQDRDEDLMPEYKGRTALVRDAHKESYILQISNVRLEDRGLYQCQVWVGNSSREDNVTLQVAVLGSDPYIHVKGYDAGWIELLCQSVGWFPKPWTEWRDTTGRALLSLSEVHSLDENGLFRTAVSSRIRDNALGNVSCTIHNEALGQEKTTAMIIGAPERGSLSSPAVALSVVLPVLGLLILLGIWLICKQKKSKEKLLYEQAMEVENLLEDHAKEKGRLHKALKKLRSELKLKRAAANAGWRRARLHFVAVTLDPDTAHPKLILSEDRRCVRLGDRKRPVPDNPERFDFVVSVLGSEYFTTGCHYWEVYVGEKTKWILGVCSESVSRKGKVTASPANGHWLVRQSRGNEYEALTSPQTSFRLKESPKCVGIFLDYEAGIISFYNVTDKSHIFTFTHSFSSPLRPFFEPCLHDEGKNTAPLIICTELQKSEESIVPKQEGKDRANGDVSLKMNPSLLSPQGSELFLLNDTWPSNLGPALKGLKVPSL.

The signal sequence occupies residues 1–29; sequence MERPSPCGSWLVGCLFTIAVFQPPVQVLG. The Ig-like V-type domain occupies 30 to 139; that stretch reads DAGKVYIAPL…SSREDNVTLQ (110 aa). Topologically, residues 30–246 are extracellular; that stretch reads DAGKVYIAPL…PERGSLSSPA (217 aa). Cysteine 47 and cysteine 123 are disulfide-bonded. N-linked (GlcNAc...) asparagine glycosylation is found at asparagine 135 and asparagine 214. Residues 247-267 form a helical membrane-spanning segment; it reads VALSVVLPVLGLLILLGIWLI. Over 268–566 the chain is Cytoplasmic; that stretch reads CKQKKSKEKL…ALKGLKVPSL (299 aa). A B30.2/SPRY domain is found at 311-509; the sequence is KLKRAAANAG…LIICTELQKS (199 aa). Serine 509 is modified (phosphoserine).

The protein belongs to the immunoglobulin superfamily. BTN/MOG family. Glycosylated. In terms of tissue distribution, expressed in spleen and bone marrow.

It is found in the cell membrane. The protein resides in the cytoplasm. Its function is as follows. Possible role as a cell-adhesion or receptor molecule of erythroid cells. This chain is Erythroid membrane-associated protein (Ermap), found in Mus musculus (Mouse).